A 113-amino-acid chain; its full sequence is Dolichyl-diphosphooligosaccharide--protein glycosyltransferase subunit DAD1 (113 aa).

An N-acetylserine modification is found at Ser-2. Residues 2–30 (SASVLSVISRFLEEYLSSTPQRLKLLDAY) are Cytoplasmic-facing. The helical transmembrane segment at 31-51 (LLYILLTGALQFGYCLLVGTF) threads the bilayer. Residue Pro-52 is a topological domain, lumenal. A helical membrane pass occupies residues 53 to 73 (FNSFLSGFISCVGSFILAVCL). Topologically, residues 74–92 (RIQINPQNKADFQGISPER) are cytoplasmic. Residues 93–113 (AFADFLFASTILHLVVMNFVG) traverse the membrane as a helical segment.

It belongs to the DAD/OST2 family. Component of the oligosaccharyltransferase (OST) complex. OST exists in two different complex forms which contain common core subunits RPN1, RPN2, OST48, OST4, DAD1 and TMEM258, either STT3A or STT3B as catalytic subunits, and form-specific accessory subunits. STT3A complex assembly occurs through the formation of 3 subcomplexes. Subcomplex 1 contains RPN1 and TMEM258, subcomplex 2 contains the STT3A-specific subunits STT3A, DC2/OSTC, and KCP2 as well as the core subunit OST4, and subcomplex 3 contains RPN2, DAD1, and OST48. The STT3A complex can form stable complexes with the Sec61 complex or with both the Sec61 and TRAP complexes.

The protein resides in the endoplasmic reticulum membrane. It participates in protein modification; protein glycosylation. Its function is as follows. Subunit of the oligosaccharyl transferase (OST) complex that catalyzes the initial transfer of a defined glycan (Glc(3)Man(9)GlcNAc(2) in eukaryotes) from the lipid carrier dolichol-pyrophosphate to an asparagine residue within an Asn-X-Ser/Thr consensus motif in nascent polypeptide chains, the first step in protein N-glycosylation. N-glycosylation occurs cotranslationally and the complex associates with the Sec61 complex at the channel-forming translocon complex that mediates protein translocation across the endoplasmic reticulum (ER). All subunits are required for a maximal enzyme activity. This chain is Dolichyl-diphosphooligosaccharide--protein glycosyltransferase subunit DAD1, found in Sus scrofa (Pig).